A 377-amino-acid polypeptide reads, in one-letter code: Homoserine O-succinyltransferase (377 aa).

The AB hydrolase-1 domain maps to 45 to 356 (NAVLVCHALN…PHGHDAFLLD (312 aa)). Serine 151 serves as the catalytic Nucleophile. Arginine 221 is a binding site for substrate. Active-site residues include aspartate 317 and histidine 350. Residue aspartate 351 coordinates substrate.

This sequence belongs to the AB hydrolase superfamily. MetX family. In terms of assembly, homodimer.

It is found in the cytoplasm. It carries out the reaction L-homoserine + succinyl-CoA = O-succinyl-L-homoserine + CoA. The protein operates within amino-acid biosynthesis; L-methionine biosynthesis via de novo pathway; O-succinyl-L-homoserine from L-homoserine: step 1/1. Transfers a succinyl group from succinyl-CoA to L-homoserine, forming succinyl-L-homoserine. This chain is Homoserine O-succinyltransferase, found in Leptothrix cholodnii (strain ATCC 51168 / LMG 8142 / SP-6) (Leptothrix discophora (strain SP-6)).